We begin with the raw amino-acid sequence, 210 residues long: Phosphoheptose isomerase (210 aa).

The SIS domain maps to 38–202 (IAACLARGGK…ENVAALAPYL (165 aa)). Residue 53-55 (NGG) participates in substrate binding. The Zn(2+) site is built by His-62 and Glu-66. Residues Glu-66, 95–96 (ND), 121–123 (STS), Ser-126, and Gln-173 each bind substrate. Positions 173 and 181 each coordinate Zn(2+).

This sequence belongs to the SIS family. GmhA subfamily. In terms of assembly, homotetramer. The cofactor is Zn(2+).

It localises to the cytoplasm. It carries out the reaction 2 D-sedoheptulose 7-phosphate = D-glycero-alpha-D-manno-heptose 7-phosphate + D-glycero-beta-D-manno-heptose 7-phosphate. Its pathway is carbohydrate biosynthesis; D-glycero-D-manno-heptose 7-phosphate biosynthesis; D-glycero-alpha-D-manno-heptose 7-phosphate and D-glycero-beta-D-manno-heptose 7-phosphate from sedoheptulose 7-phosphate: step 1/1. Functionally, catalyzes the isomerization of sedoheptulose 7-phosphate in D-glycero-D-manno-heptose 7-phosphate. The polypeptide is Phosphoheptose isomerase (Desulfovibrio desulfuricans (strain ATCC 27774 / DSM 6949 / MB)).